Here is an 80-residue protein sequence, read N- to C-terminus: Metallothionein-like protein type 2, MT2-22 (80 aa).

Belongs to the metallothionein superfamily. Type 15 family.

Metallothioneins have a high content of cysteine residues that bind various heavy metals. This chain is Metallothionein-like protein type 2, MT2-22, found in Brassica juncea (Indian mustard).